The following is a 588-amino-acid chain: Nuclear hormone receptor family member nhr-23 (588 aa).

The tract at residues L50–S73 is disordered. The segment covering A52 to T64 has biased composition (polar residues). A DNA-binding region (nuclear receptor) is located at residues V160–F235. NR C4-type zinc fingers lie at residues C163–C183 and C199–C223. The 242-residue stretch at P345 to D586 folds into the NR LBD domain.

The protein belongs to the nuclear hormone receptor family. NR1 subfamily. As to expression, expressed in the germline and oocytes and is a maternal gene product. In males and sperm-producing hermaphrodites, expressed in early pachytene spermatocytes, increasing in level throughout late pachytene. Expression is undetectable in meiotically dividing spermatocytes or mature spermatids.

It is found in the nucleus. Its function is as follows. Orphan nuclear receptor. Transcription factor. Modulates expression of target genes, such as Period protein homolog lin-42 and microRNA let-7, by binding to hormone response elements (HRE). Involved in promoting oscillatory expression of the primary transcripts of let-7 and paralogous microRNAs miR-48, miR-84, and miR-241. Plays a role in normal development and required to regulate each larval molt. Involved in regulating both the frequency and number of molts, acting as part of a negative feedback loop with the let-7 family of microRNAs, perhaps contributing to a self-sustaining molecular-genetic oscillator. Positively modulates expression of collagen and hedgehog-related genes. Involved in development of the gonad and associated epidermal structures. Required in spermatogenesis, acting following the sperm/oocyte cell fate decision, downstream of the canonical sex-determination pathway. Involved in regulating formation of the sperm-specific fibrous body-membranous organelle (FB-MO) complexes, acting independently of transcription regulator spe-44. This chain is Nuclear hormone receptor family member nhr-23, found in Caenorhabditis elegans.